The chain runs to 420 residues: COP9 signalosome complex subunit 11 (420 aa).

A PCI domain is found at 177–346 (SIHEHPSLVD…VYYKEDLPVG (170 aa)). The interval 386-420 (VEPLNRSQDMDAFELHEQSEDEEYEEEHLEEGENV) is disordered. Residues 404–420 (SEDEEYEEEHLEEGENV) are compositionally biased toward acidic residues.

As to quaternary structure, component of a COP9 signalosome-like (CSN) complex.

It localises to the cytoplasm. Its subcellular location is the nucleus. Functionally, component of the COP9 signalosome (CSN) complex that acts as an regulator of the ubiquitin (Ubl) conjugation pathway by mediating the deneddylation of the cullin subunit of SCF-type E3 ubiquitin-protein ligase complexes The CSN complex is involved in the regulation of the mating pheromone response. PCI8 may also be involved in transcriptional and translational control. The sequence is that of COP9 signalosome complex subunit 11 (PCI8) from Eremothecium gossypii (strain ATCC 10895 / CBS 109.51 / FGSC 9923 / NRRL Y-1056) (Yeast).